The primary structure comprises 280 residues: Bifunctional protein FolD (280 aa).

NADP(+) is bound by residues 166-168 and Ser-191; that span reads GRS.

It belongs to the tetrahydrofolate dehydrogenase/cyclohydrolase family. As to quaternary structure, homodimer.

The enzyme catalyses (6R)-5,10-methylene-5,6,7,8-tetrahydrofolate + NADP(+) = (6R)-5,10-methenyltetrahydrofolate + NADPH. The catalysed reaction is (6R)-5,10-methenyltetrahydrofolate + H2O = (6R)-10-formyltetrahydrofolate + H(+). The protein operates within one-carbon metabolism; tetrahydrofolate interconversion. Catalyzes the oxidation of 5,10-methylenetetrahydrofolate to 5,10-methenyltetrahydrofolate and then the hydrolysis of 5,10-methenyltetrahydrofolate to 10-formyltetrahydrofolate. The polypeptide is Bifunctional protein FolD (Cellvibrio japonicus (strain Ueda107) (Pseudomonas fluorescens subsp. cellulosa)).